The following is a 153-amino-acid chain: Histone H2B.4 (153 aa).

Basic and acidic residues-rich tracts occupy residues 1-28 and 36-53; these read MAPKAEKKPAAKKPAEEEPAAEKAEKAP and EKRLPAGKAEKGSGEGKK. The tract at residues 1–61 is disordered; it reads MAPKAEKKPA…KKAGRKKAKK (61 aa). 2 positions are modified to N6-acetyllysine: lysine 7 and lysine 37. A Glycyl lysine isopeptide (Lys-Gly) (interchain with G-Cter in ubiquitin) cross-link involves residue lysine 149.

The protein belongs to the histone H2B family. As to quaternary structure, the nucleosome is a histone octamer containing two molecules each of H2A, H2B, H3 and H4 assembled in one H3-H4 heterotetramer and two H2A-H2B heterodimers. The octamer wraps approximately 147 bp of DNA. Can be acetylated to form H2BK6ac and H2BK33ac. In terms of processing, monoubiquitinated by BRE1 to form H2BK143ub1 and deubiquitinated by UBP26. Required for heterochromatic histone H3 di- and trimethylation at H3K4me. May give a specific tag for epigenetic transcriptional activation.

It is found in the nucleus. Its subcellular location is the chromosome. Its function is as follows. Core component of nucleosome. Nucleosomes wrap and compact DNA into chromatin, limiting DNA accessibility to the cellular machineries which require DNA as a template. Histones thereby play a central role in transcription regulation, DNA repair, DNA replication and chromosomal stability. DNA accessibility is regulated via a complex set of post-translational modifications of histones, also called histone code, and nucleosome remodeling. This is Histone H2B.4 (H2B.4) from Oryza sativa subsp. indica (Rice).